Consider the following 147-residue polypeptide: Large ribosomal subunit protein bL9 (147 aa).

Belongs to the bacterial ribosomal protein bL9 family.

Binds to the 23S rRNA. The protein is Large ribosomal subunit protein bL9 of Bdellovibrio bacteriovorus (strain ATCC 15356 / DSM 50701 / NCIMB 9529 / HD100).